A 407-amino-acid polypeptide reads, in one-letter code: Argininosuccinate synthase (407 aa).

Residues alanine 16–serine 24 and alanine 44 contribute to the ATP site. Residues tyrosine 96 and serine 101 each contribute to the L-citrulline site. Glycine 126 provides a ligand contact to ATP. Residues threonine 128, asparagine 132, and aspartate 133 each contribute to the L-aspartate site. Asparagine 132 is an L-citrulline binding site. L-citrulline contacts are provided by arginine 136, serine 185, serine 194, glutamate 270, and tyrosine 282.

This sequence belongs to the argininosuccinate synthase family. Type 1 subfamily. In terms of assembly, homotetramer.

It is found in the cytoplasm. The catalysed reaction is L-citrulline + L-aspartate + ATP = 2-(N(omega)-L-arginino)succinate + AMP + diphosphate + H(+). It participates in amino-acid biosynthesis; L-arginine biosynthesis; L-arginine from L-ornithine and carbamoyl phosphate: step 2/3. The chain is Argininosuccinate synthase from Shewanella frigidimarina (strain NCIMB 400).